The following is a 175-amino-acid chain: Shikimate kinase (175 aa).

Residue 10 to 15 (GAGKTT) coordinates ATP. Thr-14 lines the Mg(2+) pocket. The substrate site is built by Asp-32, Arg-56, and Gly-78. Arg-116 serves as a coordination point for ATP. Arg-135 contacts substrate.

This sequence belongs to the shikimate kinase family. In terms of assembly, monomer. The cofactor is Mg(2+).

It localises to the cytoplasm. The catalysed reaction is shikimate + ATP = 3-phosphoshikimate + ADP + H(+). It functions in the pathway metabolic intermediate biosynthesis; chorismate biosynthesis; chorismate from D-erythrose 4-phosphate and phosphoenolpyruvate: step 5/7. In terms of biological role, catalyzes the specific phosphorylation of the 3-hydroxyl group of shikimic acid using ATP as a cosubstrate. The sequence is that of Shikimate kinase from Aromatoleum aromaticum (strain DSM 19018 / LMG 30748 / EbN1) (Azoarcus sp. (strain EbN1)).